A 984-amino-acid polypeptide reads, in one-letter code: Protein translocase subunit SecA (984 aa).

ATP-binding positions include Gln-96, 114–118 (GEGKT), and Asp-595. Composition is skewed to basic and acidic residues over residues 930-942 (EHEE…RLLE) and 952-971 (KSDK…EERL). Residues 930-984 (EHEEEKKHQRLLEEAELQGVQGKSDKKPRPKTLKERLKEERLRKRKLKAKKKEQE) form a disordered region. Residues 972-984 (RKRKLKAKKKEQE) show a composition bias toward basic residues.

The protein belongs to the SecA family. As to quaternary structure, monomer and homodimer. Part of the essential Sec protein translocation apparatus which comprises SecA, SecYEG and auxiliary proteins SecDF. Other proteins may also be involved.

It localises to the cell inner membrane. The protein localises to the cytoplasm. The enzyme catalyses ATP + H2O + cellular proteinSide 1 = ADP + phosphate + cellular proteinSide 2.. Its function is as follows. Part of the Sec protein translocase complex. Interacts with the SecYEG preprotein conducting channel. Has a central role in coupling the hydrolysis of ATP to the transfer of proteins into and across the cell membrane, serving as an ATP-driven molecular motor driving the stepwise translocation of polypeptide chains across the membrane. This chain is Protein translocase subunit SecA, found in Aquifex aeolicus (strain VF5).